A 474-amino-acid polypeptide reads, in one-letter code: Proline--tRNA ligase (474 aa).

The protein belongs to the class-II aminoacyl-tRNA synthetase family. ProS type 3 subfamily. In terms of assembly, homodimer.

It localises to the cytoplasm. It carries out the reaction tRNA(Pro) + L-proline + ATP = L-prolyl-tRNA(Pro) + AMP + diphosphate. Its function is as follows. Catalyzes the attachment of proline to tRNA(Pro) in a two-step reaction: proline is first activated by ATP to form Pro-AMP and then transferred to the acceptor end of tRNA(Pro). The protein is Proline--tRNA ligase of Mycoplasma mycoides subsp. mycoides SC (strain CCUG 32753 / NCTC 10114 / PG1).